An 848-amino-acid polypeptide reads, in one-letter code: MSAVESPVIVTEPGSLKPQGLTQTATGGKFGAAATVKTTPTKAKPYVKPQNANNLQNNFNPRKIFTEYISKEETDAGIEDGSMFKGVLRINPKNYQECFLDHPKGTNHPDVLVLGQDRNRAMQGDVVAVKIKPKEDWLVNYVEYVKWWAEHKKGDRNSGKTDNNSPNKTEKRCLRNEIQDNGVTSDEVPDSCLITIGAIVHILEKKHFRVAAGKLQLMPNSANPNVLFVATDSRVPRILIPKSDVDKEFFSRPKDFERFLYTAKITDWRAESVYADGRLVKLLGMSGEIDTETERIVYEHQIDHREFSDECLESLPITTAENWKVPDAEFEYRRDFRSDIVFTIDPKTARDLDDALHAKHIDDCDGKGTPGLEIGVHIADVTFFLKEGTELDKWASERGNSTYLSQTVIPMLPRILCEQLCSLNPGVDRLSFSTVFKMSYEAELYDVWFGRSVIRSRVKLAYEHAQDFIENPEKDFTCDELPDISDGNTPFEIKEKTLMLHRIAQVLRQKREDSGALRIELPRLKFALDEDKKPQGVSIYEIKDSNKLVEEFMLLANMEVAKKIAENFPEHALLRNHPPPKEKMIKDVAEQCARIGFPLDGRTSGLLSTSLRKYQGKSRLDMCIRQVISSLTIKPMQQAKYFCTFEMPLSFYHHFALNVDHYTHFTSPIRRYPDVIVHRQLAAALGYNERSERVPEEIQEICTRCNDTKLASKEASDESAMLYFGVFIHQTGPMKCQAVVLGVMDLSFDVLIVEYGVVKRVYVDKMKRDFNKSTEKLTIYWPADPNAESGNREEFSSSIQMCNVVYVILVPYKSIEVSATIVRPSLEQRNILKSTLKDMKETGSTILQ.

The disordered stretch occupies residues K153–C173. D345 and D354 together coordinate Mg(2+).

Belongs to the RNR ribonuclease family. DIS3L2 subfamily. It depends on Mg(2+) as a cofactor. Mn(2+) is required as a cofactor. In terms of processing, cleaved by caspase ced-3 in vitro.

The protein localises to the cytoplasm. The protein resides in the P-body. Functionally, 3'-5'-exoribonuclease that specifically recognizes RNAs polyuridylated at their 3' end and mediates their degradation. Component of an exosome-independent RNA degradation pathway that mediates degradation of cytoplasmic mRNAs that have been deadenylated and subsequently uridylated at their 3'. The chain is DIS3-like exonuclease 2 from Caenorhabditis elegans.